The sequence spans 206 residues: Small ribosomal subunit protein uS4 (206 aa).

Positions 96–156 (GRLDNVVYRM…EKSKKQARIK (61 aa)) constitute an S4 RNA-binding domain.

This sequence belongs to the universal ribosomal protein uS4 family. As to quaternary structure, part of the 30S ribosomal subunit. Contacts protein S5. The interaction surface between S4 and S5 is involved in control of translational fidelity.

Its function is as follows. One of the primary rRNA binding proteins, it binds directly to 16S rRNA where it nucleates assembly of the body of the 30S subunit. Functionally, with S5 and S12 plays an important role in translational accuracy. This is Small ribosomal subunit protein uS4 from Haemophilus influenzae (strain ATCC 51907 / DSM 11121 / KW20 / Rd).